A 391-amino-acid polypeptide reads, in one-letter code: ATP phosphoribosyltransferase regulatory subunit (391 aa).

The protein belongs to the class-II aminoacyl-tRNA synthetase family. HisZ subfamily. Heteromultimer composed of HisG and HisZ subunits.

Its subcellular location is the cytoplasm. The protein operates within amino-acid biosynthesis; L-histidine biosynthesis; L-histidine from 5-phospho-alpha-D-ribose 1-diphosphate: step 1/9. Functionally, required for the first step of histidine biosynthesis. May allow the feedback regulation of ATP phosphoribosyltransferase activity by histidine. This chain is ATP phosphoribosyltransferase regulatory subunit, found in Prochlorococcus marinus (strain NATL2A).